The chain runs to 105 residues: dATP/dGTP diphosphohydrolase (105 aa).

It belongs to the Caudovirales dATP/dGTP diphosphohydrolase family. Co(2+) serves as cofactor.

The enzyme catalyses dGTP + H2O = dGMP + diphosphate + H(+). The catalysed reaction is dATP + H2O = dAMP + diphosphate + H(+). It functions in the pathway purine metabolism. Catalyzes the hydrolysis of dGTP into dGMP, which is needed among other for the first step of biosynthesis of dZTP (2-amino-2'-deoxyadenosine-5'-triphosphate). In Cyanophage S-2L (Cyanobacteria phage S-2L), this protein is dATP/dGTP diphosphohydrolase.